Consider the following 219-residue polypeptide: Isovaleryl-homoserine lactone synthase (219 aa).

It belongs to the autoinducer synthase family.

It catalyses the reaction 3-methylbutanoyl-CoA + S-adenosyl-L-methionine = N-isovaleryl-L-homoserine lactone + S-methyl-5'-thioadenosine + CoA + H(+). In terms of biological role, catalyzes the synthesis of IV-HSL (isovaleryl-homoserine lactone), a quorum-sensing (QS) autoinducer molecule which binds to BjaR1 transcriptional regulator to activate expression of QS-dependent genes. Is active with isovaleryl-CoA but cannot use isovaleryl-ACP as acyl donor. The polypeptide is Isovaleryl-homoserine lactone synthase (bjaI) (Bradyrhizobium diazoefficiens (strain JCM 10833 / BCRC 13528 / IAM 13628 / NBRC 14792 / USDA 110)).